The following is a 400-amino-acid chain: EGCKPCECDKSGSRLEQCNLYDGQCDCVDGRGGRDCSQCPEMSWGDPFLGCKSCTCNPDGARSLYCNKVTGQCECPRGVTGLNCDRCDRGTYGALPQCIPCGECFDNWDKLIAQLRDEAAAQLRIGTEIKLSGPPGAFAKEFEELEQVLMDMKSHVNSANVSSDQLENIDQELDNLSSKLKDLKPNLASHGSRTGEASVKISELYSRVLNLQSEFNKSSAKTKELRENALEIQEQDVSGAYASIQESLVKSSALQAKLTDAENSKNISVYFRTSVEHFLQNSNFSDANSENGNENSLDKVVEFMKAVDENVSSINTELCGGTGSPCHEDCGGAMCGKCGGELCGDGAVTKAVEAKNTSRKAEELIKSKYRSTSSTLSELENSNKQCKQATAEAKNNAHEA.

Laminin EGF-like domains are found at residues 1–5 (EGCKP), 6–53 (CECD…GCKS), and 54–100 (CTCN…QCIP). Cystine bridges form between Cys6-Cys18, Cys8-Cys25, Cys27-Cys36, Cys39-Cys51, Cys54-Cys66, Cys56-Cys73, Cys75-Cys84, and Cys87-Cys98. Residues 101–400 (CGECFDNWDK…AEAKNNAHEA (300 aa)) form a domain II and I region. The stretch at 140-235 (KEFEELEQVL…RENALEIQEQ (96 aa)) forms a coiled coil. 7 N-linked (GlcNAc...) asparagine glycosylation sites follow: Asn160, Asn175, Asn216, Asn266, Asn283, Asn310, and Asn356. A coiled-coil region spans residues 353–400 (EAKNTSRKAEELIKSKYRSTSSTLSELENSNKQCKQATAEAKNNAHEA). The tract at residues 369-400 (YRSTSSTLSELENSNKQCKQATAEAKNNAHEA) is disordered. Low complexity predominate over residues 371-383 (STSSTLSELENSN).

As to quaternary structure, laminin is a complex glycoprotein, consisting of three different polypeptide chains (alpha, beta, gamma), which are bound to each other by disulfide bonds into a cross-shaped molecule comprising one long and three short arms with globules at each end. In terms of tissue distribution, individual glial and muscle cells.

Its subcellular location is the secreted. The protein resides in the extracellular space. It localises to the extracellular matrix. In terms of biological role, binding to cells via a high affinity receptor, laminin is thought to mediate the attachment, migration and organization of cells into tissues during embryonic development by interacting with other extracellular matrix components. The sequence is that of Laminin subunit B from Hirudo medicinalis (Medicinal leech).